The sequence spans 97 residues: Large ribosomal subunit protein eL21 (97 aa).

The tract at residues 1 to 23 (MTKMSKGPRSGSRRVMTKSVKNK) is disordered.

The protein belongs to the eukaryotic ribosomal protein eL21 family.

This Picrophilus torridus (strain ATCC 700027 / DSM 9790 / JCM 10055 / NBRC 100828 / KAW 2/3) protein is Large ribosomal subunit protein eL21.